Consider the following 466-residue polypeptide: Ribulose bisphosphate carboxylase large chain (466 aa).

Lys-5 carries the N6,N6,N6-trimethyllysine modification. Positions 114 and 164 each coordinate substrate. Lys-166 serves as the catalytic Proton acceptor. Residue Lys-168 participates in substrate binding. Residues Lys-192, Asp-194, and Glu-195 each coordinate Mg(2+). At Lys-192 the chain carries N6-carboxylysine. The Proton acceptor role is filled by His-285. Positions 286, 318, and 370 each coordinate substrate.

Belongs to the RuBisCO large chain family. Type I subfamily. Heterohexadecamer of 8 large chains and 8 small chains; disulfide-linked. The disulfide link is formed within the large subunit homodimers. Mg(2+) is required as a cofactor. The disulfide bond which can form in the large chain dimeric partners within the hexadecamer appears to be associated with oxidative stress and protein turnover.

Its subcellular location is the plastid. It localises to the chloroplast. It catalyses the reaction 2 (2R)-3-phosphoglycerate + 2 H(+) = D-ribulose 1,5-bisphosphate + CO2 + H2O. The catalysed reaction is D-ribulose 1,5-bisphosphate + O2 = 2-phosphoglycolate + (2R)-3-phosphoglycerate + 2 H(+). RuBisCO catalyzes two reactions: the carboxylation of D-ribulose 1,5-bisphosphate, the primary event in carbon dioxide fixation, as well as the oxidative fragmentation of the pentose substrate in the photorespiration process. Both reactions occur simultaneously and in competition at the same active site. The chain is Ribulose bisphosphate carboxylase large chain from Bixa orellana (Lipstick tree).